The sequence spans 1248 residues: Bifunctional autolysin (1248 aa).

The signal sequence occupies residues 1 to 29 (MAKKFNYKLPSMVALTLVGSAVTAHQVQA). The tract at residues 103–134 (GDTRANQSATTNNTQPVAKSTSTTAPKTNTNV) is disordered. The interval 191 to 767 (ASAQPRSVAA…AVAQPKTAVK (577 aa)) is N-acetylmuramoyl-L-alanine amidase. 7 GW domains span residues 435–509 (TVAA…YNTA), 511–585 (SPVN…DTAK), 604–678 (TVSS…YNNA), 680–754 (SPVN…VPAA), 776–851 (TTQT…VQNL), 853–928 (KEVK…APTA), and 935–1009 (AAKD…KELI). The tract at residues 768 to 1248 (AYTVTKPQTT…GKYFDIPQYK (481 aa)) is endo-beta-N-acetylglucosaminidase.

In the N-terminal section; belongs to the N-acetylmuramoyl-L-alanine amidase 2 family. The protein in the C-terminal section; belongs to the glycosyl hydrolase 73 family. In terms of assembly, oligomer; forms a ring structure at the cell surface which is important for efficient partitioning of daughter cells after cell division. In terms of processing, undergoes proteolytic processing to generate the two extracellular lytic enzymes, probably at the septal region on the cell surface.

It localises to the secreted. It carries out the reaction Hydrolyzes the link between N-acetylmuramoyl residues and L-amino acid residues in certain cell-wall glycopeptides.. The enzyme catalyses an N(4)-(oligosaccharide-(1-&gt;3)-[oligosaccharide-(1-&gt;6)]-beta-D-Man-(1-&gt;4)-beta-D-GlcNAc-(1-&gt;4)-alpha-D-GlcNAc)-L-asparaginyl-[protein] + H2O = an oligosaccharide-(1-&gt;3)-[oligosaccharide-(1-&gt;6)]-beta-D-Man-(1-&gt;4)-D-GlcNAc + N(4)-(N-acetyl-beta-D-glucosaminyl)-L-asparaginyl-[protein]. Endohydrolysis of the di-N-acetylchitobiosyl unit in high-mannose glycopeptides and glycoproteins containing the -[(Man)5(GlcNAc)2]-Asn structure. One N-acetyl-D-glucosamine residue remains attached to the protein; the rest of the oligosaccharide is released intact. Cleaves the peptidoglycan connecting the daughter cells at the end of the cell division cycle, resulting in the separation of the two newly divided cells. Acts as an autolysin in penicillin-induced lysis. The polypeptide is Bifunctional autolysin (atl) (Staphylococcus aureus (strain Mu50 / ATCC 700699)).